The following is a 299-amino-acid chain: MANFPASLLILNGKSADNQPLREAITLLRDEGIQIHVRVTWEKGDAQRYVDEARRLGVETVIAGGGDGTINEVSTALIQIRDGVAPALGLLPLGTANDFATSAGIPEALDKALKLAIAGNAMEIDMARVNDKTCFINMATGGFGTRITTETPEKLKAALGGVSYLIHGLMRMDTLTPDRCEIRGENFHWQGDALVIGIGNGRQAGGGQQLCPTALINDGLLQLRIFTGEELLPALFSTLTQSDDNPNIIDGASAWFDIHAPHEITFNLDGEPLSGQEFHIEVLPGALRCRLPPDCPLLR.

Residues 2–133 (ANFPASLLIL…IDMARVNDKT (132 aa)) enclose the DAGKc domain. ATP contacts are provided by residues threonine 40, 66–72 (GDGTINE), and threonine 95. Mg(2+)-binding residues include leucine 215, aspartate 218, and leucine 220. Glutamate 271 functions as the Proton acceptor in the catalytic mechanism.

The protein belongs to the diacylglycerol/lipid kinase family. YegS lipid kinase subfamily. The cofactor is Mg(2+). Requires Ca(2+) as cofactor.

The protein resides in the cytoplasm. In terms of biological role, probably phosphorylates lipids; the in vivo substrate is unknown. The chain is Probable lipid kinase YegS from Salmonella agona (strain SL483).